The sequence spans 261 residues: Endonuclease NucS (261 aa).

This sequence belongs to the NucS endonuclease family.

It localises to the cytoplasm. In terms of biological role, cleaves both 3' and 5' ssDNA extremities of branched DNA structures. The chain is Endonuclease NucS from Aeropyrum pernix (strain ATCC 700893 / DSM 11879 / JCM 9820 / NBRC 100138 / K1).